Here is a 152-residue protein sequence, read N- to C-terminus: Leukocyte-associated immunoglobulin-like receptor 2 (152 aa).

Residues 1–21 (MSPHLTALLGLVLCLAQTIHT) form the signal peptide. One can recognise an Ig-like C2-type domain in the interval 29 to 117 (PSISAEPGTV…GWSEHSDFLE (89 aa)). Cys49 and Cys101 are oxidised to a cystine. The disordered stretch occupies residues 120–152 (VKESSGGPDSPDTEPGSSAGTVPGTEASGFDAP).

Its subcellular location is the secreted. The polypeptide is Leukocyte-associated immunoglobulin-like receptor 2 (LAIR2) (Homo sapiens (Human)).